The following is a 695-amino-acid chain: DNA ligase (695 aa).

30-34 (DADFD) is an NAD(+) binding site. Positions 52–71 (TGASPTEEVAPAPPTSSPFR) are disordered. Residues 81–82 (SL) and Glu106 contribute to the NAD(+) site. The N6-AMP-lysine intermediate role is filled by Lys108. NAD(+) contacts are provided by Arg129, Glu169, Lys285, and Lys309. Zn(2+)-binding residues include Cys403, Cys406, Cys422, and Cys428. One can recognise a BRCT domain in the interval 599–688 (VDSALLEGLT…APSSGDDAST (90 aa)). The disordered stretch occupies residues 676 to 695 (ENGAPSSGDDASTSADSVDD). Positions 679 to 695 (APSSGDDASTSADSVDD) are enriched in low complexity.

It belongs to the NAD-dependent DNA ligase family. LigA subfamily. Mg(2+) serves as cofactor. The cofactor is Mn(2+).

The catalysed reaction is NAD(+) + (deoxyribonucleotide)n-3'-hydroxyl + 5'-phospho-(deoxyribonucleotide)m = (deoxyribonucleotide)n+m + AMP + beta-nicotinamide D-nucleotide.. In terms of biological role, DNA ligase that catalyzes the formation of phosphodiester linkages between 5'-phosphoryl and 3'-hydroxyl groups in double-stranded DNA using NAD as a coenzyme and as the energy source for the reaction. It is essential for DNA replication and repair of damaged DNA. This Corynebacterium jeikeium (strain K411) protein is DNA ligase.